A 169-amino-acid chain; its full sequence is Disulfide bond formation protein B (169 aa).

At 1–13 (MQSLISFAHSRLS) the chain is on the cytoplasmic side. The chain crosses the membrane as a helical span at residues 14-30 (WGILALSALALESAALY). At 31–48 (FQHIMKLDPCVMCIYQRV) the chain is on the periplasmic side. Cys40 and Cys43 are oxidised to a cystine. Residues 49–64 (AVFGLLGAGLFGFMAP) traverse the membrane as a helical segment. The Cytoplasmic segment spans residues 65–71 (ANRVIRA). The chain crosses the membrane as a helical span at residues 72 to 89 (LGALLWGISAAWGLKLAL). Over 90–144 (ELVDMQNNPNPFSTCSFLPEFPSWLQLHEWLPSVFMPTGMCTDIPWEFAGVTMGE) the chain is Periplasmic. Residues Cys104 and Cys130 are joined by a disulfide bond. The helical transmembrane segment at 145-163 (WMIVAFSVYLLAWLAFIVP) threads the bilayer. Residues 164-169 (MLKKSA) lie on the Cytoplasmic side of the membrane.

Belongs to the DsbB family.

The protein resides in the cell inner membrane. Its function is as follows. Required for disulfide bond formation in some periplasmic proteins. Acts by oxidizing the DsbA protein. This Shewanella amazonensis (strain ATCC BAA-1098 / SB2B) protein is Disulfide bond formation protein B.